We begin with the raw amino-acid sequence, 1288 residues long: Disease resistance protein RRS1 (1288 aa).

The TIR domain maps to 5 to 146 (EKDEEFVCIS…EIVRDVYETH (142 aa)). The interval 25–26 (SH) is important for interaction with RPS4. The region spanning 170-421 (IGIRCVGIWG…LLEGCGFFPH (252 aa)) is the NB-ARC domain. Residue 179 to 186 (GMPGIGKT) participates in ATP binding. LRR repeat units follow at residues 498–522 (SEEI…AFKN), 535–553 (NPEV…HSLP), 554–575 (NELR…NFDP), 577–598 (HLVE…TKNL), 621–646 (AENL…RLLR), 665–688 (PPNI…TVKP), 697–720 (LTEI…NSSC), 740–764 (LPNM…SIQG), 766–791 (PRFL…SLEI), 792–807 (LNAH…NMAN), 808–829 (LEFL…QGFP), and 830–852 (RNLK…PLSL). The Nuclear localization signal signature appears at 986-1003 (RKFHCWAPWQVVPKVRKD). Positions 1202-1270 (IPAIDEGDLW…YLSEHNHPRP (69 aa)) form a DNA-binding region, WRKY. The tract at residues 1267–1288 (HPRPTKRKALADSTRSTSSSIC) is disordered. Residues 1279–1288 (STRSTSSSIC) are compositionally biased toward polar residues.

This sequence belongs to the disease resistance TIR-NB-LRR family. Interacts with PopP2, a R.solanacearum type III effector. Interacts with RPS4.

The protein localises to the nucleus. The protein resides in the cytoplasm. Transcription factor. Interacts specifically with the W box (5'-(T)TGAC[CT]-3'), a frequently occurring elicitor-responsive cis-acting element. Also acts as a disease resistance protein involved in resistance to fungal and bacterial pathogens, including R.solanacearum, P.syringae pv. tomato and C.higginsianum. Heterodimerization with RPS4 is required to form a functional complex to recognize AvrRps4 and PopP2. Contributes to temperature-conditioned RPS4 auto-immunity. The polypeptide is Disease resistance protein RRS1 (Arabidopsis thaliana (Mouse-ear cress)).